A 1084-amino-acid polypeptide reads, in one-letter code: Probable sucrose-phosphate synthase 1 (1084 aa).

Gly residues predominate over residues 25–46 (GGGGGGGGGGGGGGGGGGGGGV). Residues 25–61 (GGGGGGGGGGGGGGGGGGGGGVDPRSPAAGAASPRGP) are disordered. The segment covering 48 to 61 (PRSPAAGAASPRGP) has biased composition (low complexity).

It belongs to the glycosyltransferase 1 family. As to quaternary structure, homodimer or homotetramer. Expressed in leaves mesophyll cells, scutellum of germinating seedlings and pollen of immature inflorescences.

It carries out the reaction beta-D-fructose 6-phosphate + UDP-alpha-D-glucose = sucrose 6(F)-phosphate + UDP + H(+). It functions in the pathway glycan biosynthesis; sucrose biosynthesis; sucrose from D-fructose 6-phosphate and UDP-alpha-D-glucose: step 1/2. With respect to regulation, activity is regulated by phosphorylation and moderated by concentration of metabolites and light. Plays a role in photosynthetic sucrose synthesis by catalyzing the rate-limiting step of sucrose biosynthesis from UDP-glucose and fructose- 6-phosphate. Involved in the regulation of carbon partitioning in the leaves of plants. May regulate the synthesis of sucrose and therefore play a major role as a limiting factor in the export of photoassimilates out of the leaf. Plays a role for sucrose availability that is essential for plant growth and fiber elongation. This Oryza sativa subsp. indica (Rice) protein is Probable sucrose-phosphate synthase 1 (SPS1).